A 143-amino-acid chain; its full sequence is Small ribosomal subunit protein bS6 (143 aa).

Residues 98–143 (TEQSLIMKSKDEKGDKPERSERRRRDDEEGEAPAANDNDGDNAEAA) are disordered. Positions 105 to 124 (KSKDEKGDKPERSERRRRDD) are enriched in basic and acidic residues.

Belongs to the bacterial ribosomal protein bS6 family.

Functionally, binds together with bS18 to 16S ribosomal RNA. The sequence is that of Small ribosomal subunit protein bS6 from Xanthomonas euvesicatoria pv. vesicatoria (strain 85-10) (Xanthomonas campestris pv. vesicatoria).